We begin with the raw amino-acid sequence, 103 residues long: 4-amino-4-deoxychorismate mutase (103 aa).

Positions 1–92 constitute a Chorismate mutase domain; the sequence is MTEQNELQRL…EMCRVEDLVM (92 aa).

The enzyme catalyses 4-amino-4-deoxychorismate = 4-amino-4-deoxyprephenate. Its pathway is antibiotic biosynthesis. Its function is as follows. Involved in chloramphenicol biosynthesis. Probably catalyzes the conversion of 4-amino-4-deoxychorismate to 4-amino-4-deoxyprephenate. The polypeptide is 4-amino-4-deoxychorismate mutase (Streptomyces venezuelae (strain ATCC 10712 / CBS 650.69 / DSM 40230 / JCM 4526 / NBRC 13096 / PD 04745)).